Reading from the N-terminus, the 460-residue chain is tRNA(Ile)-lysidine synthase (460 aa).

Residue 30 to 35 (SGGLDS) participates in ATP binding.

Belongs to the tRNA(Ile)-lysidine synthase family.

The protein resides in the cytoplasm. It carries out the reaction cytidine(34) in tRNA(Ile2) + L-lysine + ATP = lysidine(34) in tRNA(Ile2) + AMP + diphosphate + H(+). In terms of biological role, ligates lysine onto the cytidine present at position 34 of the AUA codon-specific tRNA(Ile) that contains the anticodon CAU, in an ATP-dependent manner. Cytidine is converted to lysidine, thus changing the amino acid specificity of the tRNA from methionine to isoleucine. The sequence is that of tRNA(Ile)-lysidine synthase from Yersinia pestis.